We begin with the raw amino-acid sequence, 387 residues long: Pepsin II-2/3 (387 aa).

Positions 1–15 (MKWLLLLGLLALSEC) are cleaved as a signal peptide. A propeptide spans 16–59 (IVHKVPLVRKKSLRKNLIEKGLLQDYLKTHTPNPATKYFPKETF) (activation peptide). The 310-residue stretch at 75–384 (YFGTISIGTP…DRANNQLGLA (310 aa)) folds into the Peptidase A1 domain. Residue Asp-93 is part of the active site. An intrachain disulfide couples Cys-106 to Cys-111. Residue Ser-129 is modified to Phosphoserine. Cys-267 and Cys-271 are oxidised to a cystine. Residue Asp-276 is part of the active site. Cysteines 310 and 343 form a disulfide.

Belongs to the peptidase A1 family.

The protein localises to the secreted. It catalyses the reaction Preferential cleavage: hydrophobic, preferably aromatic, residues in P1 and P1' positions. Cleaves 1-Phe-|-Val-2, 4-Gln-|-His-5, 13-Glu-|-Ala-14, 14-Ala-|-Leu-15, 15-Leu-|-Tyr-16, 16-Tyr-|-Leu-17, 23-Gly-|-Phe-24, 24-Phe-|-Phe-25 and 25-Phe-|-Tyr-26 bonds in the B chain of insulin.. Its function is as follows. Shows particularly broad specificity; although bonds involving phenylalanine and leucine are preferred, many others are also cleaved to some extent. This Oryctolagus cuniculus (Rabbit) protein is Pepsin II-2/3.